We begin with the raw amino-acid sequence, 120 residues long: C-C motif chemokine 16 (120 aa).

Positions 1–23 (MKVSEAALSLLVLILIITSASRS) are cleaved as a signal peptide. Cystine bridges form between cysteine 37–cysteine 60 and cysteine 38–cysteine 76.

It belongs to the intercrine beta (chemokine CC) family. Mainly expressed in liver, also found in spleen and thymus. Highly expressed in LPS- and IFN-gamma-activated monocytes, weakly in some lymphocytes, including natural killer cells, gamma-delta T-cells, and some T-cell clones.

It localises to the secreted. Its function is as follows. Shows chemotactic activity for lymphocytes and monocytes but not neutrophils. Also shows potent myelosuppressive activity, suppresses proliferation of myeloid progenitor cells. Recombinant SCYA16 shows chemotactic activity for monocytes and THP-1 monocytes, but not for resting lymphocytes and neutrophils. Induces a calcium flux in THP-1 cells that were desensitized by prior expression to RANTES. The chain is C-C motif chemokine 16 (CCL16) from Homo sapiens (Human).